A 226-amino-acid chain; its full sequence is Cytidylate kinase (226 aa).

10 to 18 (GPASSGKST) contributes to the ATP binding site.

Belongs to the cytidylate kinase family. Type 1 subfamily.

It localises to the cytoplasm. It catalyses the reaction CMP + ATP = CDP + ADP. The catalysed reaction is dCMP + ATP = dCDP + ADP. This chain is Cytidylate kinase, found in Streptococcus thermophilus (strain CNRZ 1066).